Consider the following 85-residue polypeptide: Antitoxin VapB31 (85 aa).

Functionally, antitoxin component of a type II toxin-antitoxin (TA) system. Upon expression in M.smegmatis neutralizes the effect of cognate toxin VapC31. The polypeptide is Antitoxin VapB31 (vapB31) (Mycobacterium tuberculosis (strain ATCC 25618 / H37Rv)).